A 204-amino-acid chain; its full sequence is MDKVLFLLFVLSLGVSSQPITDSQRLFSIAVSRVQHLHLLAQRLFTDFESSLQIEEQRQLNKIFLQDFCNSDYIISPIDKHETQRSSVLKLLSISYRLIESWEFPSRSLYGGSAQRYQISPKLSELMRGIQLLIKANQDGAEMFSDGVVPQLAPYGNYYQSLGEDESLRRSYELLACFKKDMHKVETYLTVAKCRLSPEANCTL.

A signal peptide spans 1-17 (MDKVLFLLFVLSLGVSS). Gln-18 is modified (pyrrolidone carboxylic acid). His-36 is a binding site for Zn(2+). The cysteines at positions 69 and 177 are disulfide-linked. Glu-186 lines the Zn(2+) pocket. An intrachain disulfide couples Cys-194 to Cys-202.

Belongs to the somatotropin/prolactin family.

The protein localises to the secreted. Its function is as follows. Growth hormone plays an important role in growth control and is involved in the regulation of several anabolic processes. Implicated as an osmoregulatory substance important for seawater adaptation. In Trichopodus trichopterus (Three spot gourami), this protein is Somatotropin (gh).